We begin with the raw amino-acid sequence, 185 residues long: DNA-directed RNA polymerase 22 kDa subunit (185 aa).

It belongs to the poxviridae DNA-directed RNA polymerase 22 kDa subunit family. In terms of assembly, the DNA-dependent RNA polymerase used for intermediate and late genes expression consists of eight subunits Rpo30/OPG66, Rpo7/OPG90, Rpo22/OPG103, Rpo147/OPG105, Rpo18/OPG119, Rpo19/OPG131, Rpo132/OPG151 and Rpo35/OPG156. The same holoenzyme, with the addition of the transcription-specificity factor OPG109, is used for early gene expression.

Its subcellular location is the virion. The enzyme catalyses RNA(n) + a ribonucleoside 5'-triphosphate = RNA(n+1) + diphosphate. Its function is as follows. Part of the DNA-dependent RNA polymerase which catalyzes the transcription of viral DNA into RNA using the four ribonucleoside triphosphates as substrates. Responsible for the transcription of early, intermediate and late genes. DNA-dependent RNA polymerase associates with the early transcription factor (ETF), itself composed of OPG118 and OPG133, thereby allowing the early genes transcription. Late transcription, and probably also intermediate transcription, require newly synthesized RNA polymerase. The polypeptide is DNA-directed RNA polymerase 22 kDa subunit (OPG103) (Variola virus (isolate Human/India/Ind3/1967) (VARV)).